A 79-amino-acid polypeptide reads, in one-letter code: Sigma-O factor regulatory protein RsoA (79 aa).

In terms of biological role, together with RNA polymerase sigma factor SigO, positively regulates the expression of at least three operons, including oxdC-yvrL, sigO-rsoA and yvrJ. Required for the acid stress-dependent induction of the oxalate decarboxylase oxdC. The protein is Sigma-O factor regulatory protein RsoA (rsoA) of Bacillus subtilis (strain 168).